Reading from the N-terminus, the 218-residue chain is Glutathione S-transferase Mu 6 (218 aa).

The GST N-terminal domain occupies 1-88 (MPVTLGYWDI…YLGRKHNLCG (88 aa)). Residues 7-8 (YW), 46-50 (WLNDK), 59-60 (NL), and 72-73 (QS) contribute to the glutathione site. Residues 90–208 (TEEERIRVDI…KTSRFLPSPV (119 aa)) form the GST C-terminal domain. Substrate is bound at residue Y116.

It belongs to the GST superfamily. Mu family. Homodimer. Expressed in liver, stomach and small intestine. Not expressed in spleen, kidney, colon, heart, muscle, brain or lung.

Its subcellular location is the cytoplasm. It carries out the reaction RX + glutathione = an S-substituted glutathione + a halide anion + H(+). Its function is as follows. Conjugation of reduced glutathione to a wide number of exogenous and endogenous hydrophobic electrophiles. This Mus musculus (Mouse) protein is Glutathione S-transferase Mu 6 (Gstm6).